The primary structure comprises 377 residues: Gibberellin 20 oxidase 1 (377 aa).

One can recognise a Fe2OG dioxygenase domain in the interval 222-322 (ENDSIMRLNY…RKSLAFFLCP (101 aa)). Fe cation-binding residues include His247, Asp249, and His303. The active site involves Arg313.

Belongs to the iron/ascorbate-dependent oxidoreductase family. GA20OX subfamily. Fe(2+) serves as cofactor. Requires L-ascorbate as cofactor. In terms of tissue distribution, highly expressed in stems and inflorescence tissues. Detected in seeds, roots, leaves and siliques.

It carries out the reaction gibberellin A12 + 2 2-oxoglutarate + 3 O2 + H(+) = gibberellin A9 + 2 succinate + 3 CO2 + 2 H2O. The enzyme catalyses gibberellin A12 + 2-oxoglutarate + O2 = gibberellin A15 + succinate + CO2. The catalysed reaction is gibberellin A15 + 2-oxoglutarate + O2 = gibberellin A24 + succinate + CO2 + H2O. It catalyses the reaction gibberellin A53 + 2-oxoglutarate + O2 = gibberellin A44 + succinate + CO2. It functions in the pathway plant hormone biosynthesis; gibberellin biosynthesis. In terms of biological role, key oxidase enzyme in the biosynthesis of gibberellin that catalyzes the conversion of GA12 to GA9, via a three-step oxidation at C-20 of the GA skeleton. GA53 is less effectively oxidized than GA12 and is only oxidized one step to GA44. Involved in the promotion of the floral transition, fertility and silique elongation, but plays only a minor role in elongation of seedling organs. Acts redundantly with GA20OX2. In Arabidopsis thaliana (Mouse-ear cress), this protein is Gibberellin 20 oxidase 1 (GA20OX1).